A 468-amino-acid polypeptide reads, in one-letter code: Probable Xaa-Pro aminopeptidase pepP (468 aa).

Asp-265, Asp-276, Glu-399, and Glu-439 together coordinate Mn(2+).

Belongs to the peptidase M24B family. Requires Mn(2+) as cofactor.

The catalysed reaction is Release of any N-terminal amino acid, including proline, that is linked to proline, even from a dipeptide or tripeptide.. Functionally, catalyzes the removal of a penultimate prolyl residue from the N-termini of peptides. The chain is Probable Xaa-Pro aminopeptidase pepP (pepP) from Aspergillus fumigatus (strain CBS 144.89 / FGSC A1163 / CEA10) (Neosartorya fumigata).